The primary structure comprises 420 residues: MDSGLYPKTGAPTWFYGWSKQREGGFSDFGSEIFRLRALPPLKAEIFRGIREVVEYNITGDSHPGYPWCKLGSDNKAVLTGFGDLIWDEVAKRFNNMLGYGDAIFSMTPSELVQNGICDAVKVFIKQEPHSLEKVNAGRLRIIAAVGLVDQIVTRLLCMKQNNAEIDCWESCPSAPGMGLNDEGLRTLYSTAQVMAEHGTICETDISGWDWSVQQWELDSDARLRTQLAGEEIGGYLNFFLRVHAYVVGHSVFVMPDGEMLEQTVPGGQLSGDYNTSSSNSRMRVIATMFARYLAGQVSGFPLLGIKAMGDDSFEIWFKGLEEYLGKMGHTVKMCVQRPGLVGFEFCSQVFLGLGIAYPVDFSKTLYRFLSHHPADPKYSEYRAQLMYYFRHLPSSTLQKVIRLAGARVERAQKLATSSN.

A RdRp catalytic domain is found at 199–325 (GTICETDISG…IWFKGLEEYL (127 aa)).

This sequence belongs to the ssRNA positive-strand viruses RNA-directed RNA polymerase family. Might be cleaved to release the mature protein(s).

It catalyses the reaction RNA(n) + a ribonucleoside 5'-triphosphate = RNA(n+1) + diphosphate. In terms of biological role, RNA-dependent RNA polymerase which replicates the viral genome. The protein is RNA-directed RNA polymerase of Mushroom bacilliform virus (isolate Australia/AUS LF-1) (MBV).